A 226-amino-acid polypeptide reads, in one-letter code: Leucyl/phenylalanyl-tRNA--protein transferase (226 aa).

It belongs to the L/F-transferase family.

The protein localises to the cytoplasm. The catalysed reaction is N-terminal L-lysyl-[protein] + L-leucyl-tRNA(Leu) = N-terminal L-leucyl-L-lysyl-[protein] + tRNA(Leu) + H(+). It catalyses the reaction N-terminal L-arginyl-[protein] + L-leucyl-tRNA(Leu) = N-terminal L-leucyl-L-arginyl-[protein] + tRNA(Leu) + H(+). It carries out the reaction L-phenylalanyl-tRNA(Phe) + an N-terminal L-alpha-aminoacyl-[protein] = an N-terminal L-phenylalanyl-L-alpha-aminoacyl-[protein] + tRNA(Phe). Functionally, functions in the N-end rule pathway of protein degradation where it conjugates Leu, Phe and, less efficiently, Met from aminoacyl-tRNAs to the N-termini of proteins containing an N-terminal arginine or lysine. This Stutzerimonas stutzeri (strain A1501) (Pseudomonas stutzeri) protein is Leucyl/phenylalanyl-tRNA--protein transferase.